A 140-amino-acid polypeptide reads, in one-letter code: Ribonuclease P protein component (140 aa).

The disordered stretch occupies residues 115-140 (RCKPGAPKPPPFKKRPNKSVKSNKQT).

It belongs to the RnpA family. Consists of a catalytic RNA component (M1 or rnpB) and a protein subunit.

It carries out the reaction Endonucleolytic cleavage of RNA, removing 5'-extranucleotides from tRNA precursor.. RNaseP catalyzes the removal of the 5'-leader sequence from pre-tRNA to produce the mature 5'-terminus. It can also cleave other RNA substrates such as 4.5S RNA. The protein component plays an auxiliary but essential role in vivo by binding to the 5'-leader sequence and broadening the substrate specificity of the ribozyme. This Pseudoalteromonas translucida (strain TAC 125) protein is Ribonuclease P protein component.